A 412-amino-acid polypeptide reads, in one-letter code: MPLQLLLLLILLGPGNSLQLWDTWADEAEKALGPLLARDRRQATEYEYLDYDFLPETEPPEMLRNSTDTTPLTGPGTPESTTVEPAARRSTGLDAGGAVTELTTELANMGNLSTDSAAMEIQTTQPAATEAQTTQPVPTEAQTTPLAATEAQTTRLTATEAQTTPLAATEAQTTPPAATEAQTTQPTGLEAQTTAPAAMEAQTTAPAAMEAQTTPPAAMEAQTTQTTAMEAQTTAPEATEAQTTQPTATEAQTTPLAAMEALSTEPSATEALSMEPTTKRGLFIPFSVSSVTHKGIPMAASNLSVNYPVGAPDHISVKQCLLAILILALVATIFFVCTVVLAVRLSRKGHMYPVRNYSPTEMVCISSLLPDGGEGPSATANGGLSKAKSPGLTPEPREDREGDDLTLHSFLP.

A signal peptide spans 1 to 17 (MPLQLLLLLILLGPGNS). A propeptide spanning residues 18–41 (LQLWDTWADEAEKALGPLLARDRR) is cleaved from the precursor. At 18 to 320 (LQLWDTWADE…APDHISVKQC (303 aa)) the chain is on the extracellular side. Q42 is modified (pyrrolidone carboxylic acid). A sulfotyrosine mark is found at Y46, Y48, and Y51. The tract at residues 56–95 (ETEPPEMLRNSTDTTPLTGPGTPESTTVEPAARRSTGLDA) is disordered. The O-linked (GalNAc...) threonine glycan is linked to T57. N65 carries N-linked (GlcNAc...) asparagine glycosylation. Low complexity predominate over residues 66–82 (STDTTPLTGPGTPESTT). A glycan (N-linked (GlcNAc...) asparagine) is linked at N111. A run of 12 repeats spans residues 122-131 (QTTQPAATEA), 132-141 (QTTQPVPTEA), 142-151 (QTTPLAATEA), 162-171 (QTTPLAATEA), 182-191 (QTTQPTGLEA), 192-201 (QTTAPAAMEA), 202-211 (QTTAPAAMEA), 212-221 (QTTPPAAMEA), 222-231 (QTTQTTAMEA), 232-241 (QTTAPEATEA), 242-251 (QTTQPTATEA), and 252-261 (QTTPLAAMEA). Residues 122-261 (QTTQPAATEA…QTTPLAAMEA (140 aa)) are 12 X 10 AA tandem repeats. Disordered stretches follow at residues 125-146 (QPAATEAQTTQPVPTEAQTTPL) and 166-252 (LAAT…TEAQ). N-linked (GlcNAc...) asparagine glycosylation is present at N302. A helical membrane pass occupies residues 321–341 (LLAILILALVATIFFVCTVVL). Topologically, residues 342-412 (AVRLSRKGHM…DDLTLHSFLP (71 aa)) are cytoplasmic. The segment at 374–412 (EGPSATANGGLSKAKSPGLTPEPREDREGDDLTLHSFLP) is disordered. Residues 395–406 (EPREDREGDDLT) are compositionally biased toward basic and acidic residues. Position 406 is a phosphothreonine (T406). A Phosphoserine modification is found at S409.

In terms of assembly, homodimer; disulfide-linked. Interaction with P-, E- and L-selectins, through their lectin/EGF domains, is required for promoting recruitment and rolling of leukocytes. These interactions require sialyl Lewis X glycan modification but there is a differing dependence for tyrosine sulfations. Sulfation on Tyr-51 of PSGL1 is most important for high affinity L-selectin/SELL binding while P-selectin/SELP requires sulfation on Tyr-48. E-selectin/SELE binds with much lower affinity and requires the sLe(x) epitope, but apparently not tyrosine sulfation. Dimerization appears not to be required for P-selectin/SELP binding. Interacts with SNX20. Interacts with MSN and SYK; mediates the activation of SYK by SELPLG. Interacts with HAVCR1. As to quaternary structure, (Microbial infection) Interacts with enterovirus 71 capsid proteins. (Microbial infection) Interacts with Staphylococcus aureus proteins SSL5 and SSL11; these interactions prevent SELPLG-mediated neutrophil rolling. Displays complex, core-2, sialylated and fucosylated O-linked oligosaccharides, at least some of which appear to contain poly-N-acetyllactosamine with varying degrees of substitution. Mainly disialylated or neutral forms of the core-2 tetrasaccharide, Galbeta1--&gt;4GlcNAcbeta1--&gt;6(Galbeta1--&gt;3)GalNAcOH. The GlcN:GalN ratio is approximately 2:1 and the Man:Fuc ratio 3:5. Contains about 14% fucose with alpha-1,3 linkage present in two forms: One species is a disialylated, monofucosylated glycan, and the other, a monosialylated, trifucosylated glycan with a polylactosamine backbone. The fucosylated forms carry the Lewis antigen and are important for interaction with selectins and for functioning in leukocyte rolling. The modification containing the sialyl Lewis X glycan is on Thr-57. No sulfated O-glycans. Some N-glycosylation. In terms of processing, sulfation, in conjunction with the SLe(x)-containing glycan, is necessary for P- and L-selectin binding. High affinity P-selectin binding has a preferred requirement for the isomer sulfated on both Tyr-48 and Tyr-51, whereas L-selectin binding requires predominantly sulfation on Tyr-51 with sulfation on Tyr-48 playing only a minor role. These sulfations play an important role in L- and P-selectin-mediated neutrophil recruitment, and leukocyte rolling. As to expression, expressed on neutrophils, monocytes and most lymphocytes.

The protein resides in the membrane. An SLe(x)-type proteoglycan, which through high affinity, calcium-dependent interactions with E-, P- and L-selectins, mediates rapid rolling of leukocytes over vascular surfaces during the initial steps in inflammation. Critical for the initial leukocyte capture. Its function is as follows. (Microbial infection) Acts as a receptor for enterovirus 71. The protein is P-selectin glycoprotein ligand 1 (SELPLG) of Homo sapiens (Human).